A 473-amino-acid polypeptide reads, in one-letter code: Rop guanine nucleotide exchange factor 3 (473 aa).

Residues 1–28 (MENLSNPDENDDHQSPRSIDQNDQSAVE) are disordered. Residues 16–28 (PRSIDQNDQSAVE) are compositionally biased toward polar residues. The 379-residue stretch at 95-473 (LVVQEISEPE…YVDKTMRGSE (379 aa)) folds into the PRONE domain.

Functionally, guanine-nucleotide exchange factor (GEF) that acts as an activator of Rop (Rho of plants) GTPases by promoting the exchange of GDP for GTP. In Arabidopsis thaliana (Mouse-ear cress), this protein is Rop guanine nucleotide exchange factor 3 (ROPGEF3).